Reading from the N-terminus, the 1437-residue chain is Myomesin-3 (1437 aa).

A disordered region spans residues 1–49 (MTLPHSLGGAGDPRPPQAMEVHRLEHRQEEEQKEERQHSLRMGSSVRRR). The segment covering 20-38 (EVHRLEHRQEEEQKEERQH) has biased composition (basic and acidic residues). Positions 120–149 (RLLRQRRDWKTLRRRTEEKVQEAKELRELC) form a coiled coil. Ig-like C2-type domains lie at 154–246 (PWFW…AKVL) and 269–361 (PSVE…TYVL). Fibronectin type-III domains lie at 375-469 (SPLN…VMGD), 503-598 (PPTN…LRGP), 604-696 (PPAQ…VKQA), 702-797 (APYG…CKEW), and 804-899 (PPYD…LEDK). 2 Ig-like C2-type domains span residues 1120 to 1205 (PYFE…LDLT) and 1334 to 1423 (AKVV…VTIS).

Homodimer.

The protein localises to the cytoplasm. The protein resides in the myofibril. It localises to the sarcomere. Its subcellular location is the m line. Functionally, may link the intermediate filament cytoskeleton to the M-disk of the myofibrils in striated muscle. The chain is Myomesin-3 (MYOM3) from Homo sapiens (Human).